We begin with the raw amino-acid sequence, 222 residues long: Pyridoxine/pyridoxamine 5'-phosphate oxidase (222 aa).

FMN is bound by residues 71–76 (RMVLLK), 86–87 (YT), Lys-93, and Gln-115. Lys-76 contributes to the substrate binding site. Positions 133, 137, and 141 each coordinate substrate. FMN contacts are provided by residues 150–151 (QS) and Trp-195. Residue 201–203 (RLH) coordinates substrate. An FMN-binding site is contributed by Arg-205.

The protein belongs to the pyridoxamine 5'-phosphate oxidase family. Homodimer. FMN serves as cofactor.

The catalysed reaction is pyridoxamine 5'-phosphate + O2 + H2O = pyridoxal 5'-phosphate + H2O2 + NH4(+). The enzyme catalyses pyridoxine 5'-phosphate + O2 = pyridoxal 5'-phosphate + H2O2. Its pathway is cofactor metabolism; pyridoxal 5'-phosphate salvage; pyridoxal 5'-phosphate from pyridoxamine 5'-phosphate: step 1/1. It functions in the pathway cofactor metabolism; pyridoxal 5'-phosphate salvage; pyridoxal 5'-phosphate from pyridoxine 5'-phosphate: step 1/1. Catalyzes the oxidation of either pyridoxine 5'-phosphate (PNP) or pyridoxamine 5'-phosphate (PMP) into pyridoxal 5'-phosphate (PLP). The chain is Pyridoxine/pyridoxamine 5'-phosphate oxidase from Caulobacter vibrioides (strain ATCC 19089 / CIP 103742 / CB 15) (Caulobacter crescentus).